A 1477-amino-acid chain; its full sequence is Putative insulin-like peptide receptor (1477 aa).

Positions 1-24 (MMRNVQSFYFLFLLIVLNFHVVLS) are cleaved as a signal peptide. Over 25–980 (AVCIGQRATT…LSVTKNNNQL (956 aa)) the chain is Extracellular. N-linked (GlcNAc...) asparagine glycosylation is found at Asn55, Asn255, Asn300, Asn325, Asn457, Asn491, Asn549, Asn644, Asn732, Asn791, Asn874, Asn895, and Asn957. Fibronectin type-III domains lie at 652–750 (EPLG…IKAD) and 780–869 (NKSP…IVQA). The Fibronectin type-III 3 domain occupies 880–971 (LDSKMVRVQV…EEIHFKVAEL (92 aa)). Residues 981–1001 (IIGIISAVSAVIVALLVFILL) form a helical membrane-spanning segment. The Cytoplasmic segment spans residues 1002–1477 (YMFLHRKLEK…EIFYGKPIPV (476 aa)). The region spanning 1044-1315 (IELIRELGQG…LENEVDDDFV (272 aa)) is the Protein kinase domain. Residues 1050 to 1058 (LGQGSFGMV) and Lys1077 each bind ATP. Catalysis depends on Asp1175, which acts as the Proton acceptor. Tyr1201 is subject to Phosphotyrosine; by autocatalysis. 2 disordered regions span residues 1350 to 1376 (YTKGDGNMQNMLSRSQNRKSAIEKSKE) and 1391 to 1421 (KYDANDTPEEIPKKKKRPRSKRNSAVDSNAC). A compositionally biased stretch (polar residues) spans 1356–1368 (NMQNMLSRSQNRK). Residues 1403–1412 (KKKKRPRSKR) show a composition bias toward basic residues.

The protein belongs to the protein kinase superfamily. Tyr protein kinase family. Insulin receptor subfamily. Requires Mn(2+) as cofactor. In terms of tissue distribution, expressed in dividing epithelial cells.

It localises to the membrane. It catalyses the reaction L-tyrosyl-[protein] + ATP = O-phospho-L-tyrosyl-[protein] + ADP + H(+). This receptor probably binds an insulin related protein and has a tyrosine-protein kinase activity. This Hydra vulgaris (Hydra) protein is Putative insulin-like peptide receptor (HTK7).